The primary structure comprises 197 residues: 3-isopropylmalate dehydratase small subunit (197 aa).

The protein belongs to the LeuD family. LeuD type 1 subfamily. As to quaternary structure, heterodimer of LeuC and LeuD.

The catalysed reaction is (2R,3S)-3-isopropylmalate = (2S)-2-isopropylmalate. Its pathway is amino-acid biosynthesis; L-leucine biosynthesis; L-leucine from 3-methyl-2-oxobutanoate: step 2/4. In terms of biological role, catalyzes the isomerization between 2-isopropylmalate and 3-isopropylmalate, via the formation of 2-isopropylmaleate. The polypeptide is 3-isopropylmalate dehydratase small subunit (Corynebacterium glutamicum (strain R)).